Consider the following 380-residue polypeptide: MTLQINAAFDGGNIHVVEQDGNRIYLEIIKDNQSDFFQWFYFKVTGAKDQALELVVTNASDSAYPAGWPDYQARVSEDRQDWQMTETDYRDGMLTIRYTPRSNIAYFAYFAPYSMERHHDLIARMAGKSGVGYEMLGKSLDGQSMDCLTMGEGRRSIWLIARQHPGETMAEWWMEGALERLTDENDSVARLLRQKARFHIMPNMNPDGSCRGHLRTNACGANLNREWAEPTAERSPEVLDVRNHMDKTGVDFVMDVHGDEAIPHVFLAGFEGIPDLDKAQDKLFRRYRNKLAKYTPDFQRHYGYENDEPGQANLALATNQLAYRYKAVSMTLEMPFKDHDDMPDLKKGWSPERSKQLGRDCLAILAEMIDQLPISGKDLA.

The Peptidase M14 domain occupies 111-369 (APYSMERHHD…DCLAILAEMI (259 aa)). Positions 164, 167, and 257 each coordinate Zn(2+). E333 (proton donor/acceptor) is an active-site residue.

Requires Zn(2+) as cofactor.

This is an uncharacterized protein from Zymomonas mobilis subsp. mobilis (strain ATCC 31821 / ZM4 / CP4).